Reading from the N-terminus, the 153-residue chain is Prefoldin subunit alpha (153 aa).

The protein belongs to the prefoldin subunit alpha family. As to quaternary structure, heterohexamer of two alpha and four beta subunits.

It localises to the cytoplasm. In terms of biological role, molecular chaperone capable of stabilizing a range of proteins. Seems to fulfill an ATP-independent, HSP70-like function in archaeal de novo protein folding. The polypeptide is Prefoldin subunit alpha (Methanothrix thermoacetophila (strain DSM 6194 / JCM 14653 / NBRC 101360 / PT) (Methanosaeta thermophila)).